We begin with the raw amino-acid sequence, 348 residues long: Glycerol-1-phosphate dehydrogenase [NAD(P)+] (348 aa).

Residues 94–98 (GKVID) and 116–119 (TTAS) each bind NAD(+). Asp121 provides a ligand contact to substrate. Ser125 lines the NAD(+) pocket. Asp168 contacts substrate. The Zn(2+) site is built by Asp168 and His248. His252 serves as a coordination point for substrate. Residue His264 coordinates Zn(2+).

The protein belongs to the glycerol-1-phosphate dehydrogenase family. Homooctamer. Zn(2+) is required as a cofactor.

Its subcellular location is the cytoplasm. It catalyses the reaction sn-glycerol 1-phosphate + NAD(+) = dihydroxyacetone phosphate + NADH + H(+). The enzyme catalyses sn-glycerol 1-phosphate + NADP(+) = dihydroxyacetone phosphate + NADPH + H(+). The protein operates within membrane lipid metabolism; glycerophospholipid metabolism. Catalyzes the NAD(P)H-dependent reduction of dihydroxyacetonephosphate (DHAP or glycerone phosphate) to glycerol 1-phosphate (G1P). The G1P thus generated is used as the glycerophosphate backbone of phospholipids in the cellular membranes of Archaea. In Methanobrevibacter smithii (strain ATCC 35061 / DSM 861 / OCM 144 / PS), this protein is Glycerol-1-phosphate dehydrogenase [NAD(P)+].